The following is a 348-amino-acid chain: Aspartate carbamoyltransferase catalytic subunit (348 aa).

Positions 59 and 60 each coordinate carbamoyl phosphate. Lysine 87 is a binding site for L-aspartate. Positions 109, 142, and 145 each coordinate carbamoyl phosphate. Arginine 182 and arginine 253 together coordinate L-aspartate. Glycine 294 and proline 295 together coordinate carbamoyl phosphate.

The protein belongs to the aspartate/ornithine carbamoyltransferase superfamily. ATCase family. In terms of assembly, heterododecamer (2C3:3R2) of six catalytic PyrB chains organized as two trimers (C3), and six regulatory PyrI chains organized as three dimers (R2).

It catalyses the reaction carbamoyl phosphate + L-aspartate = N-carbamoyl-L-aspartate + phosphate + H(+). The protein operates within pyrimidine metabolism; UMP biosynthesis via de novo pathway; (S)-dihydroorotate from bicarbonate: step 2/3. Catalyzes the condensation of carbamoyl phosphate and aspartate to form carbamoyl aspartate and inorganic phosphate, the committed step in the de novo pyrimidine nucleotide biosynthesis pathway. The protein is Aspartate carbamoyltransferase catalytic subunit of Prochlorococcus marinus (strain MIT 9313).